A 395-amino-acid chain; its full sequence is S-adenosylmethionine synthase (395 aa).

His-16 contributes to the ATP binding site. Asp-18 lines the Mg(2+) pocket. Glu-44 serves as a coordination point for K(+). L-methionine contacts are provided by Glu-57 and Gln-100. A flexible loop region spans residues 100-110 (QSPDIAQGVDR). ATP-binding positions include 167 to 169 (DAK), 233 to 234 (RF), Asp-242, 248 to 249 (RK), Ala-265, and Lys-269. Asp-242 contacts L-methionine. L-methionine is bound at residue Lys-273.

Belongs to the AdoMet synthase family. As to quaternary structure, homotetramer; dimer of dimers. Mg(2+) is required as a cofactor. K(+) serves as cofactor.

The protein localises to the cytoplasm. The enzyme catalyses L-methionine + ATP + H2O = S-adenosyl-L-methionine + phosphate + diphosphate. The protein operates within amino-acid biosynthesis; S-adenosyl-L-methionine biosynthesis; S-adenosyl-L-methionine from L-methionine: step 1/1. Its function is as follows. Catalyzes the formation of S-adenosylmethionine (AdoMet) from methionine and ATP. The overall synthetic reaction is composed of two sequential steps, AdoMet formation and the subsequent tripolyphosphate hydrolysis which occurs prior to release of AdoMet from the enzyme. The polypeptide is S-adenosylmethionine synthase (Burkholderia mallei (strain NCTC 10247)).